Reading from the N-terminus, the 315-residue chain is Probable cell division protein WhiA (315 aa).

The H-T-H motif DNA-binding region spans 277–311; the sequence is SLQELGAMMPSGQISKSGVNHRLRKLNQIAEGYQQ.

It belongs to the WhiA family.

Its function is as follows. Involved in cell division and chromosome segregation. The chain is Probable cell division protein WhiA from Lacticaseibacillus paracasei (strain ATCC 334 / BCRC 17002 / CCUG 31169 / CIP 107868 / KCTC 3260 / NRRL B-441) (Lactobacillus paracasei).